We begin with the raw amino-acid sequence, 145 residues long: Large ribosomal subunit protein uL16 (145 aa).

This sequence belongs to the universal ribosomal protein uL16 family. As to quaternary structure, part of the 50S ribosomal subunit.

Binds 23S rRNA and is also seen to make contacts with the A and possibly P site tRNAs. In Lactobacillus gasseri (strain ATCC 33323 / DSM 20243 / BCRC 14619 / CIP 102991 / JCM 1131 / KCTC 3163 / NCIMB 11718 / NCTC 13722 / AM63), this protein is Large ribosomal subunit protein uL16.